Consider the following 785-residue polypeptide: Uncoating factor OPG117 (785 aa).

D170 is an active-site residue. A primase region spans residues 342–469; it reads TERGDHIVWI…ELMNIINDIQ (128 aa). Residues 477-639 enclose the SF3 helicase domain; it reads KNRELYEKTL…FSQPSGREAA (163 aa). Residue 503–510 participates in ATP binding; that stretch reads GETATGKS.

The protein belongs to the orthopoxvirus OPG117 family. Homomultimer; hexamer. Interacts with OPG148.

The protein localises to the host cytoplasm. Its function is as follows. Multifunctional protein required for genome uncoating and replication. Major viral uncoating protein that is required for the release of the viral genome from incoming viral cores containing the viral DNA genome. Possesses an ATPase activity that is required for hexamerization and uncoating. The polypeptide is Uncoating factor OPG117 (OPG117) (Bos taurus (Bovine)).